The primary structure comprises 165 residues: Yapsin-5 (165 aa).

The signal sequence occupies residues 1–24; the sequence is MQLFSILSLLSSLMCSLTVLGSSA. Asn57 is a glycosylation site (N-linked (GlcNAc...) asparagine). In terms of domain architecture, Peptidase A1 spans 67–165; it reads YVVKMEIGTP…TRLSSMTYTY (99 aa).

The protein belongs to the peptidase A1 family.

This is Yapsin-5 (YPS5) from Saccharomyces cerevisiae (strain ATCC 204508 / S288c) (Baker's yeast).